Here is a 356-residue protein sequence, read N- to C-terminus: Carbohydrate sulfotransferase 10 (356 aa).

Over M1–L6 the chain is Cytoplasmic. Residues L7–L27 traverse the membrane as a helical; Signal-anchor for type II membrane protein segment. Topologically, residues T28–N356 are lumenal. Residue N99 is glycosylated (N-linked (GlcNAc...) asparagine). 3'-phosphoadenylyl sulfate is bound by residues P127–Q133 and R189–S197. N-linked (GlcNAc...) asparagine glycans are attached at residues N228 and N316.

Belongs to the sulfotransferase 2 family.

The protein localises to the golgi apparatus membrane. The catalysed reaction is 3-O-{beta-D-GlcA-(1-&gt;[3)-alpha-D-Xyl-(1-&gt;3)-beta-D-GlcA-(1-&gt;](n)-4)-beta-D-Xyl-(1-&gt;4)-Rib-ol-P-Rib-ol-P-3-beta-D-GalNAc-(1-&gt;3)-beta-D-GlcNAc-(1-&gt;4)-O-6-P-alpha-D-Man}-L-Thr-[protein] + 3'-phosphoadenylyl sulfate = 3-O-{O-3-S-beta-D-GlcA-(1-&gt;[3)-alpha-D-Xyl-(1-&gt;3)-beta-D-GlcA-(1-&gt;](n)-4)-beta-D-Xyl-(1-&gt;4)-Rib-ol-P-Rib-ol-P-3-beta-D-GalNAc-(1-&gt;3)-beta-D-GlcNAc-(1-&gt;4)-O-6-P-alpha-D-Man}-L-Thr-[protein] + adenosine 3',5'-bisphosphate + H(+). The enzyme catalyses 17beta-estradiol 3-O-(beta-D-glucuronate) + 3'-phosphoadenylyl sulfate = 17beta-estradiol 3-O-(3-sulfo-beta-D-glucuronate) + adenosine 3',5'-bisphosphate + H(+). It catalyses the reaction 17beta-estradiol 3-O-(beta-D-glucuronate) 17-sulfate + 3'-phosphoadenylyl sulfate = 17beta-estradiol 3-O-(3-sulfo-beta-D-glucuronate) 17-sulfate + adenosine 3',5'-bisphosphate + H(+). It carries out the reaction 17beta-estradiol 17-O-(beta-D-glucuronate) + 3'-phosphoadenylyl sulfate = 17beta-estradiol 17-O-(3-sulfo-beta-D-glucuronate) + adenosine 3',5'-bisphosphate + H(+). The catalysed reaction is 16alpha,17beta-estriol 3-O-(beta-D-glucuronate) + 3'-phosphoadenylyl sulfate = 16alpha,17beta-estriol 3-O-(3-sulfo-beta-D-glucuronate) + adenosine 3',5'-bisphosphate + H(+). The enzyme catalyses 16alpha,17beta-estriol 16-O-(beta-D-glucuronate) + 3'-phosphoadenylyl sulfate = 16alpha,17beta-estriol 16-O-(3-sulfo-beta-D-glucuronate) + adenosine 3',5'-bisphosphate + H(+). It catalyses the reaction 16alpha,17beta-estriol 17-O-(beta-D-glucuronate) + 3'-phosphoadenylyl sulfate = 16alpha,17beta-estriol 17-O-(3-sulfo-beta-D-glucuronate) + adenosine 3',5'-bisphosphate + H(+). It carries out the reaction estrone 3-O-(beta-D-glucuronate) + 3'-phosphoadenylyl sulfate = estrone 3-O-(3-sulfo-beta-D-glucuronate) + adenosine 3',5'-bisphosphate + H(+). The catalysed reaction is 3alpha,20alpha-dihydroxy-5beta-pregnane 3-O-(beta-D-glucuronate) + 3'-phosphoadenylyl sulfate = 3alpha,20alpha-dihydroxy-5beta-pregnane 3-O-(3-sulfo-beta-D-glucuronate) + adenosine 3',5'-bisphosphate + H(+). The enzyme catalyses testosterone 17-O-(beta-D-glucuronate) + 3'-phosphoadenylyl sulfate = testosterone 17-O-(3-sulfo-beta-D-glucuronate) + adenosine 3',5'-bisphosphate + H(+). It catalyses the reaction 3beta-androst-5-en-17-one 3-O-(beta-D-glucuronate) + 3'-phosphoadenylyl sulfate = 3beta-androst-5-en-17-one 3-O-(3-sulfo-beta-D-glucuronate) + adenosine 3',5'-bisphosphate + H(+). It carries out the reaction 3alpha,17alpha-dihydroxy-5beta-androstane-11-one-17beta-carboxylate 3-O-(beta-D-glucuronate) + 3'-phosphoadenylyl sulfate = 3alpha,17alpha-dihydroxy-5beta-androstane-11-one-17beta-carboxylate 3-O-(3-sulfo-beta-D-glucuronate) + adenosine 3',5'-bisphosphate + H(+). The catalysed reaction is 3alpha-hydroxyetiocholan-17-one 3-O-(beta-D-glucuronate) + 3'-phosphoadenylyl sulfate = 3alpha-hydroxyetiocholan-17-one 3-O-(3-sulfo-beta-D-glucuronate) + adenosine 3',5'-bisphosphate + H(+). The protein operates within steroid metabolism. Its pathway is protein modification; carbohydrate sulfation. Catalyzes the transfer of sulfate from 3'-phosphoadenylyl sulfate (PAPS) to position 3 of terminal glucuronic acid of both protein- and lipid-linked oligosaccharides. Participates in biosynthesis of HNK-1 carbohydrate structure 3-O-sulfo-beta-D-GlcA-(1-&gt;3)-beta-D-Gal-(1-&gt;4)-D-GlcNAc-R, a sulfated glucuronyl-lactosaminyl residue carried by many neural recognition molecules, which is involved in cell interactions during ontogenetic development and in synaptic plasticity in the adult. May be indirectly involved in synapse plasticity of the hippocampus, via its role in HNK-1 biosynthesis. Sulfates terminal glucuronyl residue of the laminin globular (LG)-domain binding epitope on DAG1/alpha-dystroglycan and prevents further polymerization by LARGE1 glycosyltransferase. Likely defines the chain length of LG epitope, conferring binding specificity to extracellular matrix components. Plays a role in down-regulating the steroid hormones. Sulfates glucuronidated estrogens and androgens with an impact in hormone cycle and fertility. Has a preference for glucuronyl moiety at the 3-hydroxyl group of a sterol ring rather than the 17-hydroxyl group, showing high catalytic efficiency for 17beta-estradiol 3-O-(beta-D-glucuronate) and dehydroepiandrosterone 3-O-(beta-D-glucuronate) hormones. The protein is Carbohydrate sulfotransferase 10 (CHST10) of Pongo abelii (Sumatran orangutan).